Reading from the N-terminus, the 351-residue chain is Nicotinate-nucleotide--dimethylbenzimidazole phosphoribosyltransferase (351 aa).

The Proton acceptor role is filled by E317.

This sequence belongs to the CobT family.

It catalyses the reaction 5,6-dimethylbenzimidazole + nicotinate beta-D-ribonucleotide = alpha-ribazole 5'-phosphate + nicotinate + H(+). It participates in nucleoside biosynthesis; alpha-ribazole biosynthesis; alpha-ribazole from 5,6-dimethylbenzimidazole: step 1/2. Catalyzes the synthesis of alpha-ribazole-5'-phosphate from nicotinate mononucleotide (NAMN) and 5,6-dimethylbenzimidazole (DMB). This is Nicotinate-nucleotide--dimethylbenzimidazole phosphoribosyltransferase from Bradyrhizobium sp. (strain ORS 278).